A 352-amino-acid chain; its full sequence is MPTINFGGVEENVVTSEEFTLKKAREVLKNEVITVLGYGVQGPAQALNLKDNGFEVIIGQLEGDAYWEKAIADGFVPGKTLFPIEEAAKKGTIIKMLLSDAGQVAVWPKVKKCLKKGDALYFSHGFGIVYKDQTGIVPPKNVDVILVAPKGSGTNVRRNFKDGSGINSSYAVFQDATGRAEERTIALGIAIGSGYLFPTTFEKEVFSDLTGERGVLMGCLAGTMEAQYNVLRKHGHSPSEAFNETVEELTQSLIRLVAENGMDWMFANCSTTAQRGALDWAPKFRDAVAPVFDSLYRRVKNGAETRRVLKVNSAPNYLEKLRKELDTIKNSEMWQAGAAVRALRPENRKKKK.

The region spanning 11 to 199 is the KARI N-terminal Rossmann domain; the sequence is ENVVTSEEFT…AIGSGYLFPT (189 aa). NAD(+) is bound by residues 38–41 and 100–103; these read YGVQ and DAGQ. H124 is an active-site residue. Residue G153 coordinates NAD(+). The 148-residue stretch at 200–347 folds into the KARI C-terminal knotted domain; it reads TFEKEVFSDL…AAVRALRPEN (148 aa). Mg(2+)-binding residues include D208, E212, E244, and E248. Residue S270 participates in substrate binding.

Belongs to the ketol-acid reductoisomerase family. Mg(2+) is required as a cofactor.

The catalysed reaction is (2R)-2,3-dihydroxy-3-methylbutanoate + NAD(+) = (2S)-2-acetolactate + NADH + H(+). The protein operates within amino-acid biosynthesis; L-isoleucine biosynthesis; L-isoleucine from 2-oxobutanoate: step 2/4. It participates in amino-acid biosynthesis; L-valine biosynthesis; L-valine from pyruvate: step 2/4. Functionally, involved in the biosynthesis of branched-chain amino acids (BCAA). Catalyzes an alkyl-migration followed by a ketol-acid reduction of (S)-2-acetolactate (S2AL) to yield (R)-2,3-dihydroxy-isovalerate. In the isomerase reaction, S2AL is rearranged via a Mg-dependent methyl migration to produce 3-hydroxy-3-methyl-2-ketobutyrate (HMKB). In the reductase reaction, this 2-ketoacid undergoes a metal-dependent reduction by NADH to yield (R)-2,3-dihydroxy-isovalerate. This Desulfosudis oleivorans (strain DSM 6200 / JCM 39069 / Hxd3) (Desulfococcus oleovorans) protein is Ketol-acid reductoisomerase (NAD(+)).